The sequence spans 807 residues: MSAHESFWFKSLRWIQKQLVHTIVVPQDPFADLNLDPSRPLVYVMKTESVSDIAALHEITGKLGLPSPYQMLEIDGIKTPRVVCLEGRKPLFGKRDSNEPFLQTFQQLLALHRQQQELDIQLVPVSLYWGRTPGKEDDTMRAAVLEREDPTWLRKCLMILFLGRHNFVQFSRAVSLRHMADEHGTDKRIAHKLARVARVHFRRQRKVMTGPVLPNRQAMFHALLKSDNLKKAIAEEASSKKISEEKARETAIQYLDEIAADYSDSLVRIAERFLTWLWNKLYKGISIKGAEQIRQLHHDGHEIVYVPCHRSHMDYLLLSYILYYEGMVPPHIAAGINLNFWPAGPMFRRGGAFFIRRSFNGNKLYTAVFREYLDQLFAKGYSVEYFTEGGRSRTGRLLAPKTGMLAMTLSSVIRGIERPVTLVPVYLGYDHVMEVATYHKELSGKKKEKESVWQVFGAIRKLGNFGRGYVNFGQPITLQNFLTEKVPNWREEVGEDPEQKPSWLTPVVNALANRVMTRINDAAAASSVTLSSMVLLASEQNALERNQLERQIDLYLSLLKSVPYTSYASVTEGCGKELVDRGIELNKLTETKDDLGTIISIDDSLAISMTYYRNNIIHLFVIPSLIATVMVRHEEVSREELQELVAEFYPLLKAELFMGVTDLPAYVDALVECFKSEGLITGDNRLKLVDDRINQLLLLAGVVGETLKRYAIIFNLLGEQPRMERADLEHHSHRLASRLGAIHGVMAPEFYDKKLYALLSSKLKDLGYLSDKADGDKVRKIRDHANGLLRSSVRQTIIETLNQEQDD.

Positions 308–313 (CHRSHM) match the HXXXXD motif motif.

The protein belongs to the GPAT/DAPAT family.

It localises to the cell inner membrane. The enzyme catalyses sn-glycerol 3-phosphate + an acyl-CoA = a 1-acyl-sn-glycero-3-phosphate + CoA. It participates in phospholipid metabolism; CDP-diacylglycerol biosynthesis; CDP-diacylglycerol from sn-glycerol 3-phosphate: step 1/3. This chain is Glycerol-3-phosphate acyltransferase, found in Shewanella amazonensis (strain ATCC BAA-1098 / SB2B).